Consider the following 361-residue polypeptide: Phospho-N-acetylmuramoyl-pentapeptide-transferase (361 aa).

10 consecutive transmembrane segments (helical) span residues 26-46, 73-93, 98-118, 139-159, 168-188, 200-220, 237-257, 264-284, 289-309, and 339-359; these read SILA…VLIQ, TMGG…WGDL, VWLV…DDWI, IFGL…AAVT, IALP…IVGF, GLAI…AYAS, AGDL…FLWF, VFMG…IAVI, LVLV…IIQV, and VIVR…ATLK.

This sequence belongs to the glycosyltransferase 4 family. MraY subfamily. Requires Mg(2+) as cofactor.

It is found in the cell inner membrane. It catalyses the reaction UDP-N-acetyl-alpha-D-muramoyl-L-alanyl-gamma-D-glutamyl-meso-2,6-diaminopimeloyl-D-alanyl-D-alanine + di-trans,octa-cis-undecaprenyl phosphate = di-trans,octa-cis-undecaprenyl diphospho-N-acetyl-alpha-D-muramoyl-L-alanyl-D-glutamyl-meso-2,6-diaminopimeloyl-D-alanyl-D-alanine + UMP. The protein operates within cell wall biogenesis; peptidoglycan biosynthesis. Catalyzes the initial step of the lipid cycle reactions in the biosynthesis of the cell wall peptidoglycan: transfers peptidoglycan precursor phospho-MurNAc-pentapeptide from UDP-MurNAc-pentapeptide onto the lipid carrier undecaprenyl phosphate, yielding undecaprenyl-pyrophosphoryl-MurNAc-pentapeptide, known as lipid I. The protein is Phospho-N-acetylmuramoyl-pentapeptide-transferase of Xylella fastidiosa (strain 9a5c).